A 149-amino-acid polypeptide reads, in one-letter code: Glycophorin-A (149 aa).

The first 19 residues, 1 to 19 (MYGKIIFVLLLSAIVSISA), serve as a signal peptide directing secretion. Residues 20 to 90 (SSTTEVAMHT…QLVHRFSEPE (71 aa)) lie on the Extracellular side of the membrane. An O-linked (GalNAc...) serine glycan is attached at S21. O-linked (GalNAc...) threonine glycosylation is found at T22, T23, and T29. The O-linked (GalNAc...) serine glycan is linked to S30. Residue T31 is glycosylated (O-linked (GalNAc...) threonine). S32 is a glycosylation site (O-linked (GalNAc...) serine). Residue T35 is glycosylated (O-linked (GalNAc...) threonine). Residues S37 and S40 are each glycosylated (O-linked (GalNAc...) serine). T43 is a glycosylation site (O-linked (GalNAc...) threonine). A glycan (O-linked (GalNAc...) serine) is linked at S44. T51 and T55 each carry an O-linked (GalNAc...) threonine glycan. S62 carries an O-linked (GalNAc...) serine glycan. T68 carries an O-linked (GalNAc...) threonine glycan. Residues 91–113 (ITLIIFGVMAGVIGTILLIYYSI) traverse the membrane as a helical segment. The Cytoplasmic portion of the chain corresponds to 114-149 (RRLIKKSPSDVKPLPSPDTDVPLSSVEIENPETSDQ). The disordered stretch occupies residues 122–149 (SDVKPLPSPDTDVPLSSVEIENPETSDQ). Phosphoserine occurs at positions 137 and 147.

It belongs to the glycophorin-A family. In terms of assembly, homodimer. Component of the ankyrin-1 complex in the erythrocyte, composed of ANK1, RHCE, RHAG, SLC4A1, EPB42, GYPA, GYPB and AQP1. Interacts with SLC4A1; a GYPA monomer is bound at each end of the SLC4A1 dimer forming a heterotetramer.

The protein resides in the cell membrane. Its function is as follows. Component of the ankyrin-1 complex, a multiprotein complex involved in the stability and shape of the erythrocyte membrane. Glycophorin A is the major intrinsic membrane protein of the erythrocyte. The N-terminal glycosylated segment, which lies outside the erythrocyte membrane, has MN blood group receptors. Appears to be important for the function of SLC4A1 and is required for high activity of SLC4A1. May be involved in translocation of SLC4A1 to the plasma membrane. The sequence is that of Glycophorin-A from Pan troglodytes (Chimpanzee).